The primary structure comprises 469 residues: F-box only protein 3 (469 aa).

The F-box domain maps to 10–56 (PLTLESLPTDPLLLILSFLDYRDLINCCYVSRRLSQLSSHDPLWRRH). Residues 278–408 (VATTGDITVS…FHMACPTFRV (131 aa)) enclose the ApaG domain. Over residues 419–449 (EYEEMEEEEEEEEEEDDDDSADMDESDDDEE) the composition is skewed to acidic residues. The segment at 419-454 (EYEEMEEEEEEEEEEDDDDSADMDESDDDEEERQRR) is disordered.

As to quaternary structure, part of a SCF (SKP1-cullin-F-box) protein ligase complex SCF(FBXO3) consisting of FBXO3, SKP1, CUL1 and RBX1. Interacts with PML, interaction is direct and takes place either alone or within the SCF complex.

The protein localises to the nucleus. It functions in the pathway protein modification; protein ubiquitination. Functionally, substrate recognition component of the SCF (SKP1-CUL1-F-box protein)-type E3 ubiquitin ligase complex, SCF(FBXO3), which mediates the ubiquitination and subsequent proteasomal degradation of target proteins. Mediates the ubiquitination of HIPK2 and probably that of EP300, leading to rapid degradation by the proteasome. In the presence of PML, HIPK2 ubiquitination still occurs, but degradation is prevented. PML, HIPK2 and FBXO3 may act synergically to activate p53/TP53-dependent transactivation. The SCF(FBXO3) also acts as a regulator of inflammation by mediating ubiquitination and degradation of FBXL2 in response to lipopolysaccharide (LPS). The SCF(FBXO3) complex specifically recognizes FBXL2 phosphorylated at 'Thr-404' and promotes its ubiquitination. This is F-box only protein 3 (FBXO3) from Bos taurus (Bovine).